The primary structure comprises 600 residues: Gamma-terpinene synthase, chloroplastic (600 aa).

A chloroplast-targeting transit peptide spans 1–40 (MALNLLSSLPAACNFTRLSLPLSSKVNGFVPPITQVQYPM). Residues Asp-353, Asp-357, Asp-498, and Glu-506 each coordinate Mg(2+). The DDXXD motif signature appears at 353-357 (DDVYD).

This sequence belongs to the terpene synthase family. The cofactor is Mn(2+). It depends on Mg(2+) as a cofactor.

The protein localises to the plastid. Its subcellular location is the chloroplast. It catalyses the reaction (2E)-geranyl diphosphate = gamma-terpinene + diphosphate. It participates in secondary metabolite biosynthesis; terpenoid biosynthesis. Its activity is regulated as follows. Inhibited by 100 mM KCl. Monoterpene synthase which catalyzes the conversion of geranyl diphosphate to gamma-terpinene and the minor products limonene, alpha-pinene, beta-pinene, alpha-terpinolene, alpha-thujene, alpha-terpinene, myrcene and sabinene. This Citrus limon (Lemon) protein is Gamma-terpinene synthase, chloroplastic.